A 225-amino-acid chain; its full sequence is Shikimate kinase (225 aa).

27 to 32 (GAGKTT) is an ATP binding site. T31 is a binding site for Mg(2+). Residues D49, R73, and G95 each coordinate substrate. R132 is a binding site for ATP. Residue R150 participates in substrate binding. A disordered region spans residues 186–225 (GGSEPDEAADAAGGSEPDEAADAAGGSEPDEAADAAGGKR).

Belongs to the shikimate kinase family. As to quaternary structure, monomer. Mg(2+) serves as cofactor.

It is found in the cytoplasm. It catalyses the reaction shikimate + ATP = 3-phosphoshikimate + ADP + H(+). It functions in the pathway metabolic intermediate biosynthesis; chorismate biosynthesis; chorismate from D-erythrose 4-phosphate and phosphoenolpyruvate: step 5/7. Its function is as follows. Catalyzes the specific phosphorylation of the 3-hydroxyl group of shikimic acid using ATP as a cosubstrate. The sequence is that of Shikimate kinase from Frankia casuarinae (strain DSM 45818 / CECT 9043 / HFP020203 / CcI3).